We begin with the raw amino-acid sequence, 307 residues long: MNTQLLVTLLAMSIGGVALAAEIKMDDQSQLTQKAGKGAGESYFQPPQEKDLPANAYGELVQQGRAIFVDTQKYAAEYVGNGMNCTNCHLEQGRKANSAPLWGAYPMYPAYRKKNDKVNSYAERVQGCFQFSMNGTPPAADSHVINALTAYSYWLSTGAPTGQELPGRAYPEVPQPQGGFDIAKGKQIYAEQCAVCHGDDGQGQKAGGGYVFPPLWGKDSFNWGAGMHRINTAAAFIKESMPLGKGGSLSDADAWHVAAYMNSHERPQDPRLIEGSVEKTRLKYHANDGVNLYGQQVDGALLGQGVK.

An N-terminal signal peptide occupies residues 1–20 (MNTQLLVTLLAMSIGGVALA). 2 consecutive Cytochrome c domains span residues 59-156 (ELVQ…YWLS) and 180-265 (FDIA…NSHE). Heme c-binding residues include Cys-85, Cys-88, His-89, Cys-193, Cys-196, and His-197.

As to quaternary structure, monomer. Post-translationally, binds 2 heme c groups covalently per subunit.

The protein resides in the periplasm. The enzyme catalyses 2 thiosulfate + 2 Fe(III)-[cytochrome c] = tetrathionate + 2 Fe(II)-[cytochrome c] + 2 H(+). Catalyzes the oxidation of 2 molecules of thiosulfate to tetrathionate, using TsdB as an electron acceptor. The polypeptide is Thiosulfate dehydrogenase (tsdA) (Stutzerimonas stutzeri (strain A1501) (Pseudomonas stutzeri)).